A 326-amino-acid chain; its full sequence is Ras association domain-containing protein 2 (326 aa).

Residues 176–264 (YNHKTSVFTP…SKVFLMEKDQ (89 aa)) form the Ras-associating domain. An SARAH domain is found at 272-319 (VAQYIKFEMPVLKSFIQKLQEEEDREVEKLMQKYTVLRLMIRQRLEEI).

Interacts directly with activated KRAS in a GTP-dependent manner. Interacts (via SARAH domain) with STK3/MST2 and STK4/MST1. Phosphorylated by STK3/MST2 and STK4/MST1.

Its subcellular location is the nucleus. The protein resides in the cytoplasm. It is found in the chromosome. The protein localises to the centromere. It localises to the kinetochore. Functionally, potential tumor suppressor. Acts as a KRAS-specific effector protein. May promote apoptosis and cell cycle arrest. Stabilizes STK3/MST2 by protecting it from proteasomal degradation. The protein is Ras association domain-containing protein 2 (Rassf2) of Rattus norvegicus (Rat).